Reading from the N-terminus, the 551-residue chain is Xylulose kinase (551 aa).

Residues H114, R185, D295, and N296 each coordinate substrate. ATP-binding positions include W370, G456–A457, and N460.

Belongs to the FGGY kinase family. In terms of assembly, monomer.

The catalysed reaction is D-xylulose + ATP = D-xylulose 5-phosphate + ADP + H(+). Its function is as follows. Phosphorylates D-xylulose to produce D-xylulose 5-phosphate, a molecule that may play an important role in the regulation of glucose metabolism and lipogenesis. This chain is Xylulose kinase (Xylb), found in Mus musculus (Mouse).